Consider the following 341-residue polypeptide: Thromboxane A2 receptor (341 aa).

Over 1–29 (MWLNSTSLGACFRPVNITLQERRAIASPW) the chain is Extracellular. N-linked (GlcNAc...) asparagine glycans are attached at residues asparagine 4 and asparagine 16. A helical membrane pass occupies residues 30–52 (FAASFCALGLGSNLLALSVLAGA). Over 53–65 (RPGAGPRSSFLAL) the chain is Cytoplasmic. Residues 66-86 (LCGLVLTDFLGLLVTGAVVAS) traverse the membrane as a helical segment. Topologically, residues 87–105 (QHAALLDWRATDPGCRLCH) are extracellular. Cysteine 104 and cysteine 181 form a disulfide bridge. Residues 106–127 (FMGAAMVFFGLCPLLLGAAMAA) form a helical membrane-spanning segment. Topologically, residues 128–147 (ERFVGITRPFSRPAATSRRA) are cytoplasmic. Residues 148 to 170 (WATVGLVWVGAGTLGLLPLLGLG) traverse the membrane as a helical segment. Residues 171–191 (RYSVQYPGSWCFLTLGAERGD) are Extracellular-facing. Residues 192 to 217 (VAFGLMFALLGSVSVGLSLLLNTVSV) form a helical membrane-spanning segment. Residues 218-244 (ATLCRVYHAREATQRPRDCEVEMMVQL) lie on the Cytoplasmic side of the membrane. The chain crosses the membrane as a helical span at residues 245 to 268 (VGIMVVATVCWMPLLVFILQTLLQ). Residues 269-287 (TLPVMSPSGQLLRTTERQL) lie on the Extracellular side of the membrane. Residues 288–309 (LIYLRVATWNQILDPWVYILFR) traverse the membrane as a helical segment. The Cytoplasmic portion of the chain corresponds to 310–341 (RSVLRRLHPRFTSQLQAVSLHSPPTQAMLSGP). A Phosphoserine modification is found at serine 328.

Belongs to the G-protein coupled receptor 1 family. As to quaternary structure, interacts with RPGRIP1L. Interacts with RACK1; the interaction regulates TBXA2R cell surface expression. In terms of tissue distribution, in the brain, expressed in all types of glial cells. In the kidney, expressed in the mesangial cells of the glomerulus, smooth muscle cells of the renal arterioles, and in transitional cell epithelium of renal pelvis.

It is found in the cell membrane. Its function is as follows. Receptor for thromboxane A2 (TXA2), a potent stimulator of platelet aggregation. The activity of this receptor is mediated by a G-protein that activates a phosphatidylinositol-calcium second messenger system. In the kidney, the binding of TXA2 to glomerular TP receptors causes intense vasoconstriction. Activates phospholipase C and adenylyl cyclase. The chain is Thromboxane A2 receptor (Tbxa2r) from Rattus norvegicus (Rat).